We begin with the raw amino-acid sequence, 943 residues long: Netrin receptor UNC5B-a (943 aa).

The first 30 residues, 1–30, serve as a signal peptide directing secretion; that stretch reads MYLSRNPSGAALAAILVALILSCNFPSSTA. The Extracellular segment spans residues 31–380; the sequence is GIEYSDVLPD…LESTGDVALY (350 aa). The Ig-like domain occupies 51-148; that stretch reads PHFLLEPEDA…AGTTKSKRSY (98 aa). 9 cysteine pairs are disulfide-bonded: Cys-72–Cys-133, Cys-84–Cys-131, Cys-177–Cys-228, Cys-261–Cys-298, Cys-265–Cys-302, Cys-276–Cys-288, Cys-317–Cys-351, Cys-321–Cys-356, and Cys-329–Cys-341. Residues 150–245 enclose the Ig-like C2-type domain; it reads RIAYLRKNFD…KRRSTTATVI (96 aa). The N-linked (GlcNAc...) asparagine glycan is linked to Asn-225. 2 TSP type-1 domains span residues 249-303 and 305-357; these read NGGW…TMCP and DGGW…GLCM. An N-linked (GlcNAc...) asparagine glycan is attached at Asn-350. Residues 381–401 form a helical membrane-spanning segment; the sequence is AGLVVAIFIVIILLMAVGIVV. Residues 402–943 lie on the Cytoplasmic side of the membrane; sequence YRRNCREFDT…MLVMATDGDC (542 aa). A ZU5 domain is found at 542-685; the sequence is NSVTGTFGSL…LGTYAFVGES (144 aa). The segment at 688–836 is UPA domain; it reads RSAIKRLQLA…LEENVKSFDP (149 aa). The Death domain occupies 863–941; sequence KICNSLDAPN…EMMLVMATDG (79 aa).

This sequence belongs to the unc-5 family. As to quaternary structure, interacts (via extracellular domain) with flrt3 (via extracellular domain). Interacts with rnd1. Phosphorylated on cytoplasmic tyrosine residues. As to expression, in the developing visual system, it is expressed within the developing optic vesicles and later become restricted to the dorsal ciliary marginal zone, a site of retinoblast proliferation and differentiation.

Its subcellular location is the cell membrane. Its function is as follows. Plays a role in cell-cell adhesion during embryonic development. Receptor for netrin required for axon guidance. Mediates axon repulsion of neuronal growth cones in the developing nervous system upon ligand binding. This chain is Netrin receptor UNC5B-a (unc5b-a), found in Xenopus laevis (African clawed frog).